The sequence spans 977 residues: Protein bric-a-brac 1 (977 aa).

The interval 1-97 (MASAQAETNV…RSSSVASPSS (97 aa)) is disordered. Residues 34 to 43 (PKSNRSSPTQ) show a composition bias toward polar residues. Residues 44–69 (QEEKRIKSEDRTSPTGGAKDEDKESQ) show a composition bias toward basic and acidic residues. Residues 80-97 (SPVSSPQGRSSSVASPSS) are compositionally biased toward low complexity. Positions 127–192 (VDVTLACDGR…MYRGEINVSQ (66 aa)) constitute a BTB domain. 4 disordered regions span residues 221 to 249 (AAAAAASSERMPSSPKESTSTSRTEHDRE), 281 to 348 (ERQQ…GSTV), 362 to 434 (DMPS…RFPL), and 447 to 497 (SGLG…ADDL). Residues 316 to 330 (ERMELEQKERERQRD) show a composition bias toward basic and acidic residues. Over residues 372 to 396 (PLSRSSRPHSQSPQQQQAQQQGQLP) the composition is skewed to low complexity. Over residues 469 to 491 (GGGVGGGGVGGGGAGGVGSGGGS) the composition is skewed to gly residues. Positions 559–611 (FRERGPLKSWRPETMAEAIFSVLKEGLSLSQAARKYDIPYPTFVLYANRVHNM) constitute an HTH psq-type domain. The segment at residues 569 to 614 (RPETMAEAIFSVLKEGLSLSQAARKYDIPYPTFVLYANRVHNMLGP) is a DNA-binding region (H-T-H motif). The a.T hook DNA-binding region spans 621-632 (DLRPKGRGRPQR). 2 disordered regions span residues 772-900 (ASIS…LGDL) and 925-977 (VGAS…TTSE). Composition is skewed to low complexity over residues 804-816 (MAVALHHQQQQQA), 838-853 (QQQQQQQQQHHQGGHQ), 862-872 (ASSSSSASSSS), and 925-966 (VGAS…SSGG).

Leg imaginal disk at the central region of the tarsus and in eye antenna disk at the basal cylinder.

The protein localises to the nucleus. Its function is as follows. Probably acts as a transcriptional regulator. Required for the specification of the tarsal segment. Also involved in antenna development. The polypeptide is Protein bric-a-brac 1 (bab1) (Drosophila melanogaster (Fruit fly)).